We begin with the raw amino-acid sequence, 217 residues long: UPF0111 protein MTH_1689 (217 aa).

The protein belongs to the UPF0111 family.

The polypeptide is UPF0111 protein MTH_1689 (Methanothermobacter thermautotrophicus (strain ATCC 29096 / DSM 1053 / JCM 10044 / NBRC 100330 / Delta H) (Methanobacterium thermoautotrophicum)).